Consider the following 443-residue polypeptide: Xaa-Pro dipeptidase (443 aa).

Mn(2+) is bound by residues D246, D257, H339, E384, and E423.

The protein belongs to the peptidase M24B family. Bacterial-type prolidase subfamily. Mn(2+) is required as a cofactor.

The enzyme catalyses Xaa-L-Pro dipeptide + H2O = an L-alpha-amino acid + L-proline. Functionally, splits dipeptides with a prolyl residue in the C-terminal position. This is Xaa-Pro dipeptidase from Escherichia coli (strain 55989 / EAEC).